The chain runs to 931 residues: Dymeclin (931 aa).

3 disordered regions span residues M1–T53, S599–N618, and D839–N931. The N-myristoyl glycine moiety is linked to residue G2. Composition is skewed to low complexity over residues N27–N49 and S601–N618. The span at D839 to P858 shows a compositional bias: polar residues. 2 stretches are compositionally biased toward low complexity: residues T859–T876 and Q889–Q901. Residues T919 to N931 show a composition bias toward polar residues.

This sequence belongs to the dymeclin family.

The chain is Dymeclin (dym) from Dictyostelium discoideum (Social amoeba).